The following is a 942-amino-acid chain: Probable serine/threonine-protein kinase DDB_G0279719 (942 aa).

Residues 4–617 (YEVVKLIGVG…IDLILQNKLF (614 aa)) form the Protein kinase domain. ATP-binding positions include 10 to 18 (IGVGGEAKA) and Lys33. Disordered stretches follow at residues 109-170 (NNNQ…INNN), 247-303 (SFSN…NGNT), 352-371 (QPPQ…GADV), and 408-445 (NDPS…LNIN). The span at 258-272 (NSNDSNLHQSSSNSS) shows a compositional bias: low complexity. Over residues 288–303 (SPGTSTPYQKGSNGNT) the composition is skewed to polar residues. Low complexity-rich tracts occupy residues 353–367 (PPQS…SSPT) and 410–432 (PSSH…PQSP). Asp487 acts as the Proton acceptor in catalysis. The interval 642–686 (TNSKSNSSNNLNNSNSNNDIINNNNNNNSSNNINNNNIVNLNNSY) is disordered. Residues 675 to 703 (NNNNIVNLNNSYNNKQDKCEQRNKSLNQN) adopt a coiled-coil conformation.

It belongs to the protein kinase superfamily. Ser/Thr protein kinase family.

The enzyme catalyses L-seryl-[protein] + ATP = O-phospho-L-seryl-[protein] + ADP + H(+). It catalyses the reaction L-threonyl-[protein] + ATP = O-phospho-L-threonyl-[protein] + ADP + H(+). In Dictyostelium discoideum (Social amoeba), this protein is Probable serine/threonine-protein kinase DDB_G0279719.